Reading from the N-terminus, the 172-residue chain is Cell division protein SepF (172 aa).

The disordered stretch occupies residues 16–78 (DGDEHYEPQP…RAASNRDDSS (63 aa)). Over residues 17–48 (GDEHYEPQPEGKQTRPAQKNEEYVDQEIRHTE) the composition is skewed to basic and acidic residues.

The protein belongs to the SepF family. In terms of assembly, homodimer. Interacts with FtsZ.

Its subcellular location is the cytoplasm. In terms of biological role, cell division protein that is part of the divisome complex and is recruited early to the Z-ring. Probably stimulates Z-ring formation, perhaps through the cross-linking of FtsZ protofilaments. Its function overlaps with FtsA. This Renibacterium salmoninarum (strain ATCC 33209 / DSM 20767 / JCM 11484 / NBRC 15589 / NCIMB 2235) protein is Cell division protein SepF.